We begin with the raw amino-acid sequence, 318 residues long: Ubiquinone biosynthesis protein COQ9, mitochondrial (318 aa).

A mitochondrion-targeting transit peptide spans 1 to 44 (MAAAAVSGALGRAGWRLLQLRCLPVARCRQALVPRAFHASAVGL). An SIFI-degron motif is present at residues 16-31 (RLLQLRCLPVARCRQA). Positions 44–98 (LRSSDEQKQQPPNSFSQQHSETQGAEKPDPESSHSPPRYTDQGGEEEEDYESEEQ) are disordered. A compositionally biased stretch (polar residues) spans 52–66 (QQPPNSFSQQHSETQ). Residues 86 to 97 (GGEEEEDYESEE) show a composition bias toward acidic residues. The residue at position 175 (Lys-175) is an N6-acetyllysine. Arg-244 lines the a 1,2-diacylglycero-3-phosphoethanolamine pocket.

It belongs to the COQ9 family. In terms of assembly, homodimer. Heterodimer; two heterodimers of COQ7:COQ9 come together on the same side of the lipid pseudo-bilayer and form a curved tetramer with a hydrophobic surface suitable for membrane interaction. These two tetramers assemble into a soluble octamer with a pseudo-bilayer of lipids captured within. Interacts with COQ7; this interaction allows ubiquinone (CoQ) isoprene intermediates presentation to COQ7 and facilitates the COQ7-mediated hydroxylase step. Post-translationally, in response to mitochondrial stress, the precursor protein is ubiquitinated by the SIFI complex in the cytoplasm before mitochondrial import, leading to its degradation. Within the SIFI complex, UBR4 initiates ubiquitin chain that are further elongated or branched by KCMF1.

Its subcellular location is the mitochondrion. The protein operates within cofactor biosynthesis; ubiquinone biosynthesis. Functionally, membrane-associated protein that warps the membrane surface to access and bind aromatic isoprenes with high specificity, including ubiquinone (CoQ) isoprene intermediates and presents them directly to COQ7, therefore facilitating the COQ7-mediated hydroxylase step. Participates in the biosynthesis of coenzyme Q, also named ubiquinone, an essential lipid-soluble electron transporter for aerobic cellular respiration. In Homo sapiens (Human), this protein is Ubiquinone biosynthesis protein COQ9, mitochondrial.